A 43-amino-acid chain; its full sequence is Protein PsbN (43 aa).

A helical transmembrane segment spans residues 7–24 (VAISISRSLVSFTGYALY).

The protein belongs to the PsbN family.

It is found in the plastid. It localises to the chloroplast thylakoid membrane. Functionally, may play a role in photosystem I and II biogenesis. This chain is Protein PsbN, found in Ginkgo biloba (Ginkgo).